The chain runs to 1153 residues: ATP-dependent helicase/deoxyribonuclease subunit B (1153 aa).

One can recognise a UvrD-like helicase ATP-binding domain in the interval M1–L289. G8–S15 is an ATP binding site. Positions L269–V583 constitute a UvrD-like helicase C-terminal domain. C784, C1110, C1113, and C1119 together coordinate [4Fe-4S] cluster.

It belongs to the helicase family. AddB/RexB type 1 subfamily. As to quaternary structure, heterodimer of AddA and AddB. Mg(2+) is required as a cofactor. [4Fe-4S] cluster serves as cofactor.

The heterodimer acts as both an ATP-dependent DNA helicase and an ATP-dependent, dual-direction single-stranded exonuclease. Recognizes the chi site generating a DNA molecule suitable for the initiation of homologous recombination. The AddB subunit has 5' -&gt; 3' nuclease activity but not helicase activity. This is ATP-dependent helicase/deoxyribonuclease subunit B from Staphylococcus saprophyticus subsp. saprophyticus (strain ATCC 15305 / DSM 20229 / NCIMB 8711 / NCTC 7292 / S-41).